A 954-amino-acid polypeptide reads, in one-letter code: SWI/SNF-related matrix-associated actin-dependent regulator of chromatin subfamily A-like protein 1 (954 aa).

2 disordered regions span residues 1–20 (MSLP…RQKA) and 27–238 (KLLA…NSQK). Ser2 carries the N-acetylserine modification. The stretch at 3 to 34 (LPLTEEQRKKIEENRQKALARRAEKLLAEQHQ) forms a coiled coil. Residues 5–30 (LTEEQRKKIEENRQKALARRAEKLLA) form a mediates interaction with RPA2 region. Residues 7–20 (EEQRKKIEENRQKA) show a composition bias toward basic and acidic residues. Polar residues predominate over residues 72–83 (KQQNLSSSSNAD). Phosphoserine is present on residues Ser112, Ser123, Ser129, and Ser151. 2 stretches are compositionally biased toward polar residues: residues 171–183 (KSSQ…SSGQ) and 197–238 (ASPS…NSQK). Ser198 is modified (phosphoserine). 2 HARP domains span residues 226 to 303 (SGSS…QPLE) and 327 to 398 (SLSF…DPLP). In terms of domain architecture, Helicase ATP-binding spans 445–600 (NFAIAKGGRL…YTQIIAVKPT (156 aa)). 458–465 (DDMGLGKT) is an ATP binding site. The DESH box motif lies at 549–552 (DESH). Residues 644–661 (RRLKSDVLSQLPAKQRKI) carry the Nuclear localization signal motif. One can recognise a Helicase C-terminal domain in the interval 716–869 (YILDLLESGR…ETNFSEMTES (154 aa)). The disordered stretch occupies residues 904 to 934 (ESFDPGSASGTSGSSSQNMGDTLDESSLTAS). The segment covering 909–919 (GSASGTSGSSS) has biased composition (low complexity). A compositionally biased stretch (polar residues) spans 920-934 (QNMGDTLDESSLTAS).

This sequence belongs to the SNF2/RAD54 helicase family. SMARCAL1 subfamily. As to quaternary structure, interacts with RPA2; the interaction is direct and mediates the recruitment by the RPA complex of SMARCAL1 to sites of DNA damage. In terms of processing, DNA damage-regulated phosphorylation by kinases that may include ATM, ATR and PRKDC. Ubiquitously expressed, with high levels in testis.

Its subcellular location is the nucleus. It catalyses the reaction ATP + H2O = ADP + phosphate + H(+). ATP-dependent annealing helicase that binds selectively to fork DNA relative to ssDNA or dsDNA and catalyzes the rewinding of the stably unwound DNA. Rewinds single-stranded DNA bubbles that are stably bound by replication protein A (RPA). Acts throughout the genome to reanneal stably unwound DNA, performing the opposite reaction of many enzymes, such as helicases and polymerases, that unwind DNA. May play an important role in DNA damage response by acting at stalled replication forks. This is SWI/SNF-related matrix-associated actin-dependent regulator of chromatin subfamily A-like protein 1 from Homo sapiens (Human).